Reading from the N-terminus, the 211-residue chain is Probable GTP-binding protein EngB (211 aa).

Residues 21–197 (TAPEFAFLGR…WGEIHRVAAE (177 aa)) enclose the EngB-type G domain. Residues 29–36 (GRSNVGKS), 55–59 (GRTRA), 80–83 (DLPG), 147–150 (TKAD), and 176–178 (CSA) contribute to the GTP site. The Mg(2+) site is built by Ser36 and Thr57.

The protein belongs to the TRAFAC class TrmE-Era-EngA-EngB-Septin-like GTPase superfamily. EngB GTPase family. Mg(2+) serves as cofactor.

In terms of biological role, necessary for normal cell division and for the maintenance of normal septation. The chain is Probable GTP-binding protein EngB from Acidobacterium capsulatum (strain ATCC 51196 / DSM 11244 / BCRC 80197 / JCM 7670 / NBRC 15755 / NCIMB 13165 / 161).